Here is a 139-residue protein sequence, read N- to C-terminus: Mannose-specific lectin (139 aa).

The Bulb-type lectin domain maps to 1–109 (DNILYSGETL…ARWATGTNIH (109 aa)). Residues glutamine 26, aspartate 28, asparagine 30, tyrosine 34, aspartate 37, lysine 38, tryptophan 41, alanine 42, asparagine 44, glutamine 57, aspartate 59, asparagine 61, tyrosine 65, isoleucine 72, tryptophan 73, asparagine 76, asparagine 83, glutamine 89, aspartate 91, asparagine 93, tyrosine 97, and tryptophan 102 each contribute to the alpha-D-mannopyranose site. Cysteine 29 and cysteine 52 are oxidised to a cystine.

In terms of assembly, homotetramer; antiparallel. Detected in bulbs (at protein level).

The protein resides in the secreted. In terms of biological role, mannose-specific lectin. Displays antiviral activity and therefore may contribute to defense against infections. Shows agglutinating activity towards rabbit erythrocytes. In Narcissus tazetta (Cream narcissus), this protein is Mannose-specific lectin.